The primary structure comprises 78 residues: Major outer membrane lipoprotein Lpp (78 aa).

Positions 1 to 20 (MNRTKLVLGAVILGSTLLAG) are cleaved as a signal peptide. The N-palmitoyl cysteine moiety is linked to residue Cys-21. Cys-21 carries the S-diacylglycerol cysteine lipid modification. 2 repeats span residues 24–34 (NAKIDQLSSDV) and 38–48 (NAKVDQLSNDV). Residues 27–75 (IDQLSSDVQTLNAKVDQLSNDVNAIRSDVQAAKDDAARANQRLDNQVRT) are a coiled coil. The residue at position 78 (Lys-78) is an N6-murein peptidoglycan lysine.

The protein belongs to the Lpp family. Homotrimer.

Its subcellular location is the cell outer membrane. It is found in the secreted. It localises to the cell wall. A highly abundant outer membrane lipoprotein that controls the distance between the inner and outer membranes. The only protein known to be covalently linked to the peptidoglycan network (PGN). Also non-covalently binds the PGN. The link between the cell outer membrane and PGN contributes to maintenance of the structural and functional integrity of the cell envelope, and maintains the correct distance between the PGN and the outer membrane. The chain is Major outer membrane lipoprotein Lpp from Pectobacterium atrosepticum (strain SCRI 1043 / ATCC BAA-672) (Erwinia carotovora subsp. atroseptica).